Here is a 313-residue protein sequence, read N- to C-terminus: Probable cell division protein WhiA (313 aa).

Positions S277–E311 form a DNA-binding region, H-T-H motif.

The protein belongs to the WhiA family.

Its function is as follows. Involved in cell division and chromosome segregation. The polypeptide is Probable cell division protein WhiA (Lactobacillus gasseri (strain ATCC 33323 / DSM 20243 / BCRC 14619 / CIP 102991 / JCM 1131 / KCTC 3163 / NCIMB 11718 / NCTC 13722 / AM63)).